The following is a 350-amino-acid chain: uncharacterized protein (350 aa).

This is an uncharacterized protein from Sulfolobus islandicus filamentous virus (isolate Iceland/Hveragerdi) (SIFV).